Consider the following 919-residue polypeptide: Isoleucine--tRNA ligase (919 aa).

The short motif at 57–67 (PYANGHTHIGH) is the 'HIGH' region element. Residue E569 coordinates L-isoleucyl-5'-AMP. The 'KMSKS' region motif lies at 610–614 (KMSKS). Residue K613 coordinates ATP. Positions 895, 898, 910, and 913 each coordinate Zn(2+).

The protein belongs to the class-I aminoacyl-tRNA synthetase family. IleS type 1 subfamily. As to quaternary structure, monomer. It depends on Zn(2+) as a cofactor.

The protein resides in the cytoplasm. It catalyses the reaction tRNA(Ile) + L-isoleucine + ATP = L-isoleucyl-tRNA(Ile) + AMP + diphosphate. Catalyzes the attachment of isoleucine to tRNA(Ile). As IleRS can inadvertently accommodate and process structurally similar amino acids such as valine, to avoid such errors it has two additional distinct tRNA(Ile)-dependent editing activities. One activity is designated as 'pretransfer' editing and involves the hydrolysis of activated Val-AMP. The other activity is designated 'posttransfer' editing and involves deacylation of mischarged Val-tRNA(Ile). The polypeptide is Isoleucine--tRNA ligase (Sulfurimonas denitrificans (strain ATCC 33889 / DSM 1251) (Thiomicrospira denitrificans (strain ATCC 33889 / DSM 1251))).